The chain runs to 403 residues: DNA replication and repair protein RecF (403 aa).

30–37 (GSNGLGKT) lines the ATP pocket.

It belongs to the RecF family.

Its subcellular location is the cytoplasm. Its function is as follows. The RecF protein is involved in DNA metabolism; it is required for DNA replication and normal SOS inducibility. RecF binds preferentially to single-stranded, linear DNA. It also seems to bind ATP. The polypeptide is DNA replication and repair protein RecF (Bifidobacterium adolescentis (strain ATCC 15703 / DSM 20083 / NCTC 11814 / E194a)).